Here is an 810-residue protein sequence, read N- to C-terminus: Chloride channel protein (810 aa).

Residues Ser-2 to Leu-48 lie on the Cytoplasmic side of the membrane. The next 2 membrane-spanning stretches (helical) occupy residues Gly-49 to Met-86 and Leu-93 to Val-116. The Selectivity filter part_1 motif lies at Gly-122 to Pro-126. Residue Ser-123 participates in chloride binding. Residues Ile-125–Ile-132 constitute an intramembrane region (helical). 2 consecutive transmembrane segments (helical) span residues Leu-141–Gly-160 and Glu-166–Leu-184. The Selectivity filter part_2 signature appears at Gly-164–Pro-168. 2 intramembrane regions (helical) span residues Ile-201–Cys-213 and Pro-217–Ile-225. Transmembrane regions (helical) follow at residues Tyr-237 to Leu-254, Leu-283 to Met-311, and Ile-320 to Leu-339. An N-linked (GlcNAc...) asparagine glycan is attached at Asn-365. 2 helical membrane passes run Asn-389–Ala-408 and Gly-416–Leu-439. The short motif at Gly-416–Pro-420 is the Selectivity filter part_3 element. A chloride-binding site is contributed by Phe-418. The helical intramembrane region spans Gly-456 to Val-470. Positions Thr-471 to His-472 form an intramembrane region, note=Loop between two helices. The segment at residues Ala-473–Thr-484 is an intramembrane region (helical). The segment at residues Gly-485 to His-489 is an intramembrane region (note=Loop between two helices). The chain crosses the membrane as a helical span at residues Val-490–Gly-506. Topologically, residues Leu-507–Lys-810 are cytoplasmic. Chloride is bound at residue Tyr-512. The region spanning Met-543 to Ala-601 is the CBS 1 domain. Disordered stretches follow at residues Arg-604–Gly-631 and Lys-658–Gly-688. Residues Ile-724–Phe-781 enclose the CBS 2 domain.

Belongs to the chloride channel (TC 2.A.49) family. ClC-0 subfamily. In terms of assembly, homodimer. Each subunit has channel activity ('Double barreled channel').

It localises to the membrane. Functionally, voltage-gated chloride channel. This channel is thought to ensure the high conductance of the non-innervated membrane of the electrocyte necessary for efficient current generation caused by sodium influx through the acetylcholine receptor at the innervated membrane. This Tetronarce californica (Pacific electric ray) protein is Chloride channel protein.